Consider the following 200-residue polypeptide: Recombination protein RecR (200 aa).

The C4-type zinc finger occupies 58-73; the sequence is CQVCGNMDTENICGIC. Residues 81–176 enclose the Toprim domain; sequence SVIAIVETVA…KISRLASGIP (96 aa).

This sequence belongs to the RecR family.

Functionally, may play a role in DNA repair. It seems to be involved in an RecBC-independent recombinational process of DNA repair. It may act with RecF and RecO. This chain is Recombination protein RecR, found in Rickettsia bellii (strain OSU 85-389).